The sequence spans 173 residues: RNA pyrophosphohydrolase (173 aa).

In terms of domain architecture, Nudix hydrolase spans 13–166; that stretch reads PYRPCVGLMI…KRKVYEEVVA (154 aa). The Nudix box motif lies at 54-75; that stretch reads GGIDKGEEPLQAAERELYEETG.

This sequence belongs to the Nudix hydrolase family. RppH subfamily. A divalent metal cation serves as cofactor.

In terms of biological role, accelerates the degradation of transcripts by removing pyrophosphate from the 5'-end of triphosphorylated RNA, leading to a more labile monophosphorylated state that can stimulate subsequent ribonuclease cleavage. The sequence is that of RNA pyrophosphohydrolase from Mesorhizobium japonicum (strain LMG 29417 / CECT 9101 / MAFF 303099) (Mesorhizobium loti (strain MAFF 303099)).